Here is a 253-residue protein sequence, read N- to C-terminus: Ubiquinone/menaquinone biosynthesis C-methyltransferase UbiE (253 aa).

S-adenosyl-L-methionine is bound by residues Thr76, Asp97, and 125–126 (NA).

The protein belongs to the class I-like SAM-binding methyltransferase superfamily. MenG/UbiE family.

It catalyses the reaction a 2-demethylmenaquinol + S-adenosyl-L-methionine = a menaquinol + S-adenosyl-L-homocysteine + H(+). The catalysed reaction is a 2-methoxy-6-(all-trans-polyprenyl)benzene-1,4-diol + S-adenosyl-L-methionine = a 5-methoxy-2-methyl-3-(all-trans-polyprenyl)benzene-1,4-diol + S-adenosyl-L-homocysteine + H(+). The protein operates within quinol/quinone metabolism; menaquinone biosynthesis; menaquinol from 1,4-dihydroxy-2-naphthoate: step 2/2. It functions in the pathway cofactor biosynthesis; ubiquinone biosynthesis. Methyltransferase required for the conversion of demethylmenaquinol (DMKH2) to menaquinol (MKH2) and the conversion of 2-polyprenyl-6-methoxy-1,4-benzoquinol (DDMQH2) to 2-polyprenyl-3-methyl-6-methoxy-1,4-benzoquinol (DMQH2). In Bradyrhizobium sp. (strain BTAi1 / ATCC BAA-1182), this protein is Ubiquinone/menaquinone biosynthesis C-methyltransferase UbiE.